The chain runs to 71 residues: Probable ribosome maturation protein RlbA (71 aa).

The S4 RNA-binding domain maps to 12–69 (ITLGQFLKLADVIQSGGMAKWFLSEHEVLVNDEPDNRRGRKLYVGDVVEIEGFGSFQV).

May assist in the assembly of the 50S subunit. This is Probable ribosome maturation protein RlbA from Bacillus subtilis (strain 168).